The chain runs to 110 residues: UPF0122 protein gbs1018 (110 aa).

Belongs to the UPF0122 family.

In terms of biological role, might take part in the signal recognition particle (SRP) pathway. This is inferred from the conservation of its genetic proximity to ftsY/ffh. May be a regulatory protein. The sequence is that of UPF0122 protein gbs1018 from Streptococcus agalactiae serotype III (strain NEM316).